The following is a 405-amino-acid chain: Phosphoglycerate kinase (405 aa).

Substrate-binding positions include 23-25 (DFN), arginine 39, 62-65 (HLGR), arginine 121, and arginine 154. ATP-binding positions include lysine 207, glycine 298, glutamate 329, and 355 to 358 (GGDT).

It belongs to the phosphoglycerate kinase family. As to quaternary structure, monomer.

The protein resides in the cytoplasm. It catalyses the reaction (2R)-3-phosphoglycerate + ATP = (2R)-3-phospho-glyceroyl phosphate + ADP. It functions in the pathway carbohydrate degradation; glycolysis; pyruvate from D-glyceraldehyde 3-phosphate: step 2/5. This is Phosphoglycerate kinase from Campylobacter hominis (strain ATCC BAA-381 / DSM 21671 / CCUG 45161 / LMG 19568 / NCTC 13146 / CH001A).